The following is a 304-amino-acid chain: Glycine--tRNA ligase alpha subunit (304 aa).

The protein belongs to the class-II aminoacyl-tRNA synthetase family. Tetramer of two alpha and two beta subunits.

It is found in the cytoplasm. It catalyses the reaction tRNA(Gly) + glycine + ATP = glycyl-tRNA(Gly) + AMP + diphosphate. The chain is Glycine--tRNA ligase alpha subunit from Pectobacterium carotovorum subsp. carotovorum (strain PC1).